Reading from the N-terminus, the 479-residue chain is Serralysin C (479 aa).

Positions 1–17 are excised as a propeptide; sequence MGKNLSLRQDDAQHALS. H188 contacts Zn(2+). Residue E189 is part of the active site. 2 residues coordinate Zn(2+): H192 and Y228. 31 residues coordinate Ca(2+): R265, G267, D297, G299, G300, D302, T339, E341, G346, G348, D350, N355, A357, N359, G363, G364, A365, G366, D368, G372, G373, G375, D377, G381, G382, A383, G384, D386, D395, D402, and D412. Hemolysin-type calcium-binding repeat units lie at residues 344-361, 362-379, and 380-397; these read IGGS…DNIL, QGGA…ADTL, and YGGA…QDST.

The protein belongs to the peptidase M10B family. Requires Ca(2+) as cofactor. The cofactor is Zn(2+).

The protein localises to the secreted. It carries out the reaction Preferential cleavage of bonds with hydrophobic residues in P1'.. This is Serralysin C (prtC) from Dickeya chrysanthemi (Pectobacterium chrysanthemi).